The following is a 438-amino-acid chain: Adenylosuccinate synthetase (438 aa).

GTP contacts are provided by residues 13-19 (GDEGKGK) and 41-43 (GHT). The Proton acceptor role is filled by D14. Mg(2+) contacts are provided by D14 and G41. Residues 14–17 (DEGK), 39–42 (NAGH), T130, R144, Q225, T240, and R312 contribute to the IMP site. The Proton donor role is filled by H42. 308-314 (ATTGRQR) serves as a coordination point for substrate. Residues R314, 340 to 342 (KLD), and 422 to 424 (STG) contribute to the GTP site.

Belongs to the adenylosuccinate synthetase family. As to quaternary structure, homodimer. Requires Mg(2+) as cofactor.

The protein localises to the cytoplasm. It catalyses the reaction IMP + L-aspartate + GTP = N(6)-(1,2-dicarboxyethyl)-AMP + GDP + phosphate + 2 H(+). It functions in the pathway purine metabolism; AMP biosynthesis via de novo pathway; AMP from IMP: step 1/2. In terms of biological role, plays an important role in the de novo pathway of purine nucleotide biosynthesis. Catalyzes the first committed step in the biosynthesis of AMP from IMP. This Ruthia magnifica subsp. Calyptogena magnifica protein is Adenylosuccinate synthetase.